We begin with the raw amino-acid sequence, 97 residues long: Defensin alpha 4 (97 aa).

A signal peptide spans Met1–Ala19. Positions Gly20–Met63 are excised as a propeptide. 3 cysteine pairs are disulfide-bonded: Cys65–Cys93, Cys67–Cys82, and Cys72–Cys92. Residue Asp97 is a propeptide.

This sequence belongs to the alpha-defensin family. As to quaternary structure, homodimer; homodimerization seems to be required for killing S.aureus, but not E.coli. Interacts with CD4. Interacts with Bacillus anthracis lef; homodimerization is required for the interaction. In terms of processing, the three-dimensional structure formed by the three intramolecular disulfide bridges is indispensable for effective bacterial killing.

Its subcellular location is the secreted. It is found in the cytoplasmic vesicle. The protein resides in the secretory vesicle. Functionally, host-defense peptide that has antimicrobial activity against Gram-negative bacteria, and to a lesser extent also against Gram-positive bacteria and fungi. Exhibits antimicrobial activity against Gram-negative E.coli and E.aerogenes and Gram-positive S.faecalis, S.aureus and B.cereus and the yeast C.albicans (in vitro). Inhibits corticotropin (ACTH)-stimulated corticosterone production (in vitro). Inhibits enzymatic activity of B.anthracis lef/anthrax lethal factor (in vitro). This Pan troglodytes (Chimpanzee) protein is Defensin alpha 4 (DEFA4).